Here is a 350-residue protein sequence, read N- to C-terminus: DNA repair protein RAD51 homolog 2 (350 aa).

Residues 1–75 (MSSKKLRRVG…TAYELKTRRS (75 aa)) form an interaction with RAD51C region. 108–115 (GPPGCGKT) lines the ATP pocket.

The protein belongs to the RecA family. RAD51 subfamily. Part of the BCDX2 complex consisting of RAD51B, RAD51C, RAD51D and XRCC2; the complex has a ring-like structure arranged into a flat disc around a central channel. The BCDX2 subcomplex RAD51B:RAD51C interacts with RAD51. Interacts with SWSAP1; involved in homologous recombination repair. Interacts with HELQ. Phosphorylated on tyrosine residues by BCR-ABL. In terms of tissue distribution, expressed in a wide range of tissues.

Its subcellular location is the nucleus. Its function is as follows. Involved in the homologous recombination repair (HRR) pathway of double-stranded DNA breaks arising during DNA replication or induced by DNA-damaging agents. May promote the assembly of presynaptic RAD51 nucleoprotein filaments. Binds single-stranded DNA and double-stranded DNA and has DNA-dependent ATPase activity. Part of the RAD51 paralog protein complex BCDX2 which acts in the BRCA1-BRCA2-dependent HR pathway. Upon DNA damage, BCDX2 acts downstream of BRCA2 recruitment and upstream of RAD51 recruitment. BCDX2 binds predominantly to the intersection of the four duplex arms of the Holliday junction and to junction of replication forks. The BCDX2 complex was originally reported to bind single-stranded DNA, single-stranded gaps in duplex DNA and specifically to nicks in duplex DNA. The BCDX2 subcomplex RAD51B:RAD51C exhibits single-stranded DNA-dependent ATPase activity suggesting an involvement in early stages of the HR pathway. The polypeptide is DNA repair protein RAD51 homolog 2 (Rad51b) (Mus musculus (Mouse)).